A 513-amino-acid polypeptide reads, in one-letter code: Probable DNA ligase (513 aa).

An ATP-binding site is contributed by glutamate 213. Catalysis depends on lysine 215, which acts as the N6-AMP-lysine intermediate. Arginine 220, arginine 235, glutamate 264, phenylalanine 304, arginine 376, and lysine 382 together coordinate ATP.

Belongs to the ATP-dependent DNA ligase family. Mg(2+) serves as cofactor.

It catalyses the reaction ATP + (deoxyribonucleotide)n-3'-hydroxyl + 5'-phospho-(deoxyribonucleotide)m = (deoxyribonucleotide)n+m + AMP + diphosphate.. Functionally, DNA ligase that seals nicks in double-stranded DNA during DNA replication, DNA recombination and DNA repair. The protein is Probable DNA ligase of Anaeromyxobacter dehalogenans (strain 2CP-C).